Consider the following 203-residue polypeptide: NAD(P)H dehydrogenase (quinone) (203 aa).

Residues 3 to 194 (VLIAYYSMYG…AAARYQGKHV (192 aa)) enclose the Flavodoxin-like domain. FMN contacts are provided by residues 9 to 14 (SMYGHI) and 82 to 84 (TRF). Y11 is an NAD(+) binding site. W102 is a substrate binding site. Residues 117 to 123 (SSATQHG) and H138 each bind FMN.

It belongs to the WrbA family. FMN serves as cofactor.

It carries out the reaction a quinone + NADH + H(+) = a quinol + NAD(+). The catalysed reaction is a quinone + NADPH + H(+) = a quinol + NADP(+). In Geotalea uraniireducens (strain Rf4) (Geobacter uraniireducens), this protein is NAD(P)H dehydrogenase (quinone).